Here is a 520-residue protein sequence, read N- to C-terminus: GMP synthase [glutamine-hydrolyzing] (520 aa).

In terms of domain architecture, Glutamine amidotransferase type-1 spans 9-202 (KILILDFGSQ…VRKICGCSGK (194 aa)). The active-site Nucleophile is the Cys-86. Active-site residues include His-176 and Glu-178. The 193-residue stretch at 203–395 (WTPGQIIEDA…LGLPHQMVWR (193 aa)) folds into the GMPS ATP-PPase domain. Residue 230 to 236 (SGGVDSS) coordinates ATP.

As to quaternary structure, homodimer.

The catalysed reaction is XMP + L-glutamine + ATP + H2O = GMP + L-glutamate + AMP + diphosphate + 2 H(+). The protein operates within purine metabolism; GMP biosynthesis; GMP from XMP (L-Gln route): step 1/1. Functionally, catalyzes the synthesis of GMP from XMP. This is GMP synthase [glutamine-hydrolyzing] from Geotalea daltonii (strain DSM 22248 / JCM 15807 / FRC-32) (Geobacter daltonii).